The chain runs to 224 residues: Large ribosomal subunit protein uL4 (224 aa).

The tract at residues A52 to Q109 is disordered.

It belongs to the universal ribosomal protein uL4 family. Part of the 50S ribosomal subunit.

Its function is as follows. One of the primary rRNA binding proteins, this protein initially binds near the 5'-end of the 23S rRNA. It is important during the early stages of 50S assembly. It makes multiple contacts with different domains of the 23S rRNA in the assembled 50S subunit and ribosome. Functionally, forms part of the polypeptide exit tunnel. The polypeptide is Large ribosomal subunit protein uL4 (Mycobacterium marinum (strain ATCC BAA-535 / M)).